Consider the following 420-residue polypeptide: Na(+)/H(+) antiporter NhaA (420 aa).

Helical transmembrane passes span 34 to 54 (TTGG…ANLG), 69 to 89 (LTIE…IAGL), 107 to 127 (LVPI…YTLF), 141 to 161 (IPMA…GAGL), 168 to 190 (FLLT…FFST), 194 to 213 (IWWL…MQHF), 271 to 291 (WSAG…HVSG), 301 to 321 (PISL…ITLG), 342 to 362 (IIAV…MTDL), and 374 to 394 (AKAS…AMLH).

It belongs to the NhaA Na(+)/H(+) (TC 2.A.33) antiporter family.

It localises to the cell membrane. It catalyses the reaction Na(+)(in) + 2 H(+)(out) = Na(+)(out) + 2 H(+)(in). In terms of biological role, na(+)/H(+) antiporter that extrudes sodium in exchange for external protons. This chain is Na(+)/H(+) antiporter NhaA, found in Cutibacterium acnes (strain DSM 16379 / KPA171202) (Propionibacterium acnes).